The chain runs to 308 residues: Cilia- and flagella-associated protein 73 (308 aa).

Coiled-coil stretches lie at residues 34 to 143 and 175 to 233; these read RLLE…LEPC and AALR…WESK.

The protein belongs to the CFAP73 family.

The protein localises to the cytoplasm. The protein resides in the cytoskeleton. It is found in the cilium axoneme. May play a role in ciliary/flagellar motility by regulating the assembly and the activity of axonemal inner dynein arm. The chain is Cilia- and flagella-associated protein 73 from Homo sapiens (Human).